The following is a 161-amino-acid chain: ATP synthase subunit b (161 aa).

Residues 12–32 (IAFFLFVFFCMKYIWPNLISL) traverse the membrane as a helical segment.

This sequence belongs to the ATPase B chain family. In terms of assembly, F-type ATPases have 2 components, F(1) - the catalytic core - and F(0) - the membrane proton channel. F(1) has five subunits: alpha(3), beta(3), gamma(1), delta(1), epsilon(1). F(0) has three main subunits: a(1), b(2) and c(10-14). The alpha and beta chains form an alternating ring which encloses part of the gamma chain. F(1) is attached to F(0) by a central stalk formed by the gamma and epsilon chains, while a peripheral stalk is formed by the delta and b chains.

The protein resides in the cell membrane. Its function is as follows. F(1)F(0) ATP synthase produces ATP from ADP in the presence of a proton or sodium gradient. F-type ATPases consist of two structural domains, F(1) containing the extramembraneous catalytic core and F(0) containing the membrane proton channel, linked together by a central stalk and a peripheral stalk. During catalysis, ATP synthesis in the catalytic domain of F(1) is coupled via a rotary mechanism of the central stalk subunits to proton translocation. Functionally, component of the F(0) channel, it forms part of the peripheral stalk, linking F(1) to F(0). In Wigglesworthia glossinidia brevipalpis, this protein is ATP synthase subunit b.